A 931-amino-acid chain; its full sequence is Isoleucine--tRNA ligase (931 aa).

The short motif at 57–67 (PYANGNIHIGH) is the 'HIGH' region element. Position 555 (E555) interacts with L-isoleucyl-5'-AMP. The short motif at 596-600 (KMSKS) is the 'KMSKS' region element. K599 is a binding site for ATP. Positions 890, 893, 910, and 913 each coordinate Zn(2+).

It belongs to the class-I aminoacyl-tRNA synthetase family. IleS type 1 subfamily. In terms of assembly, monomer. Zn(2+) is required as a cofactor.

The protein localises to the cytoplasm. It carries out the reaction tRNA(Ile) + L-isoleucine + ATP = L-isoleucyl-tRNA(Ile) + AMP + diphosphate. Functionally, catalyzes the attachment of isoleucine to tRNA(Ile). As IleRS can inadvertently accommodate and process structurally similar amino acids such as valine, to avoid such errors it has two additional distinct tRNA(Ile)-dependent editing activities. One activity is designated as 'pretransfer' editing and involves the hydrolysis of activated Val-AMP. The other activity is designated 'posttransfer' editing and involves deacylation of mischarged Val-tRNA(Ile). The chain is Isoleucine--tRNA ligase from Limosilactobacillus reuteri subsp. reuteri (strain JCM 1112) (Lactobacillus reuteri).